Consider the following 622-residue polypeptide: MATVKVIDFIQTPFDFLIVGGGTAGLVLAARLSEEPGIQVGVIEAGSLRLGDPKVDLPTGPGQMLGDPGYDWNFESIPQAGANAKAYHIPRGRMLGGSSGINFMSYNRPSAEDIDDWANKLGVKGWTWSELLPYFKRSENLEPIEPSASCPVSPKVHGTGGPIHTSIGPWQAPIEESLLAAFDEAARLQRPAEPYSGAHLGFYRSLFTLDRTSTPVRSYAVSGYYAPVMGRPNLKVLENAQVCRILLSDASDGIPVAEGVELHHAGARYAVSARREVILSAGSVQSPQLLELSGIGDPSVLEGAGIACRVANTDVGSNLQEHTMSAVSYECADGIMSVDSLFKDPALLEEHQSLYAKNHSGALSGSVSLMGFTPYSSLSTETQVDATMARIFDAPSVSGRLSQQNASYQRRQQEAVAARMQNRWSADIQFIGTPAYFNTAAGYASCAKIMSGPPVGYSACYSIVVSNMYPLSRGSVHVRTSNPMDAPAIDPGFLSHPVDVDVLAAGIVFADRVFRSTLLNGKVRRRVSPPAGLDLSNMDEARQFVRNHIVPYHHALGTCAMGQVVDEKLRVKGVRRLRVVDASVMPMQVSAAIMATVYAIAERASDIIKKDCGFGRRLRAHI.

FAD is bound by residues 23–24 (TA), 44–45 (EA), and 102–105 (NFMS). Histidine 554 functions as the Proton acceptor in the catalytic mechanism. Residues alanine 582 and 593 to 594 (IM) each bind FAD.

Belongs to the GMC oxidoreductase family. In terms of assembly, homodimer. FAD serves as cofactor.

It participates in mycotoxin biosynthesis. Its function is as follows. Dehydrogenase; part of the gene cluster that mediates the biosynthesis of the mycotoxin citrinin, a hepato-nephrotoxic compound to humans due to inhibition of respiration complex III. The pathway begins with the synthesis of a keto-aldehyde intermediate by the citrinin PKS (pksCT) from successive condensations of 4 malonyl-CoA units, presumably with a simple acetyl-CoA starter unit. Release of the keto-aldehyde intermediate is consistent with the presence of the C-terminal reductive release domain. Mp11 collaborates with pksCT by catalyzing the hydrolysis of ACP-bound acyl intermediates to free the ACP from stalled intermediates. Mpl2 then catalyzes the oxidation of the C-12 methyl of the ketone intermediate to an alcohol intermediate which is further oxidized by the oxidoreductase mpl7 to produce a bisaldehyde intermediate. The fourth catalytic step is catalyzed by the mpl4 aldehyde dehydrogenase. The final transformation is the reduction of C-3 by mpl6 to provide the chemically stable citrinin nucleus. The polypeptide is Dehydrogenase mpl7 (Monascus purpureus (Red mold)).